A 331-amino-acid chain; its full sequence is Ferredoxin--NADP reductase 2 (331 aa).

FAD is bound by residues glutamate 37, glutamine 45, tyrosine 50, valine 90, phenylalanine 124, aspartate 286, and threonine 327.

The protein belongs to the ferredoxin--NADP reductase type 2 family. As to quaternary structure, homodimer. Requires FAD as cofactor.

The enzyme catalyses 2 reduced [2Fe-2S]-[ferredoxin] + NADP(+) + H(+) = 2 oxidized [2Fe-2S]-[ferredoxin] + NADPH. This chain is Ferredoxin--NADP reductase 2, found in Listeria monocytogenes serotype 4b (strain F2365).